A 232-amino-acid chain; its full sequence is MIKNHWMKKLKYLSLFFLLFAIYWFPDVILAYPEVYLKSLVGYERQVVATWIFLGNMSISLFLGILICYKLGYYKNTISIFKIKNLLFLLITTIILFVIYFFSYTYYNSHFITPGIAKTQAAFSIQIVFPFVQFITIAICAPIFEEASFRTTIYSFFKNDKIAYIVSCVGFAWMHTGPNPILIVYLPMSIVLTSIYHRRRVLGESILVHGVFNALLPIVIPLLQVITGLYYL.

6 helical membrane-spanning segments follow: residues tyrosine 12–tyrosine 32, valine 47–isoleucine 67, leucine 86–tyrosine 106, serine 124–phenylalanine 144, isoleucine 165–tyrosine 185, and isoleucine 206–isoleucine 226.

It belongs to the UPF0177 family.

The protein localises to the cell membrane. In terms of biological role, the function of this protein is currently unknown, but it has been shown that it is not necessary for phage resistance. The chain is UPF0177 protein in abiGi 5'region from Lactococcus lactis subsp. cremoris (Streptococcus cremoris).